A 386-amino-acid polypeptide reads, in one-letter code: Benzoyl-CoA reductase subunit C (386 aa).

It belongs to the FldB/FldC dehydratase alpha/beta subunit family. Heterotetramer composed of A, B, C, and D subunits. Iron-sulfur cluster is required as a cofactor. The cofactor is an oxidized flavin.

The enzyme catalyses cyclohexa-1,5-diene-1-carbonyl-CoA + oxidized 2[4Fe-4S]-[ferredoxin] + 2 ADP + 2 phosphate = reduced 2[4Fe-4S]-[ferredoxin] + benzoyl-CoA + 2 ATP + 2 H2O. It catalyses the reaction 3-hydroxybenzoyl-CoA + AH2 + 2 ATP + 2 H2O = 3-hydroxycyclohexa-1,5-diene-1-carbonyl-CoA + A + 2 ADP + 2 phosphate + 2 H(+). In terms of biological role, catalyzes the anaerobic reduction of benzoyl-CoA and 3-hydroxybenzoyl-CoA to form cyclohexa-1,5-diene-1-carbonyl-CoA and 3-hydroxycyclohexa-1,5-diene-1-carbonyl-CoA, respectively. The enzyme also reduces other benzoyl-CoA analogs with small substituents at the aromatic ring. The protein is Benzoyl-CoA reductase subunit C (bcrC) of Thauera aromatica.